The chain runs to 344 residues: Plastoglobule-localized metallopeptidase 48, chloroplastic (344 aa).

The transit peptide at 1-47 directs the protein to the chloroplast; sequence MAVSVSAPVLSLCYNQSGELSRSLGYRLPKKVGFSSGRRSVSYIGFG. Transmembrane regions (helical) follow at residues 102–122 and 169–189; these read LLGS…SVLV and FIVV…QAVL. His-191 serves as a coordination point for Zn(2+). Residue Glu-192 is part of the active site. Position 195 (His-195) interacts with Zn(2+). A helical transmembrane segment spans residues 201–221; it reads GVWLTFANILTLGAYTVPAFG. Zn(2+) is bound at residue Glu-240. Residues 256–272 traverse the membrane as a helical segment; sequence VVVSVLMKLAGGCPSIA.

This sequence belongs to the peptidase M48 family. M48D subfamily. In terms of assembly, interacts with plastoglobule (PG) core proteins ABC1K3, PES1 and CCD4. Zn(2+) is required as a cofactor. In terms of tissue distribution, mostly expressed in flowers (e.g. sepals, petals and stamen), seeds, leaves and cotyledons.

The protein localises to the plastid. It is found in the chloroplast. The protein resides in the plastoglobule. Its subcellular location is the chloroplast membrane. In terms of biological role, metalloendopeptidase with a Zn-dependent proteolytic activity and substrate cleavage upstream of hydrophobic residues. Positive regulator of senescence, probably by degrading CCD4, thus participating in the controlled removal of carotenoids from the thylakoid membrane during the senescence process. The chain is Plastoglobule-localized metallopeptidase 48, chloroplastic from Arabidopsis thaliana (Mouse-ear cress).